A 76-amino-acid polypeptide reads, in one-letter code: Acyl carrier protein (76 aa).

In terms of domain architecture, Carrier spans 2–76 (SSIFDKVKAI…SAVEYIKENQ (75 aa)). The residue at position 36 (serine 36) is an O-(pantetheine 4'-phosphoryl)serine.

It belongs to the acyl carrier protein (ACP) family. 4'-phosphopantetheine is transferred from CoA to a specific serine of apo-ACP by AcpS. This modification is essential for activity because fatty acids are bound in thioester linkage to the sulfhydryl of the prosthetic group.

The protein localises to the cytoplasm. It participates in lipid metabolism; fatty acid biosynthesis. Functionally, carrier of the growing fatty acid chain in fatty acid biosynthesis. The chain is Acyl carrier protein from Heliobacterium modesticaldum (strain ATCC 51547 / Ice1).